A 119-amino-acid chain; its full sequence is Holo-[acyl-carrier-protein] synthase (119 aa).

Residues D5 and E51 each contribute to the Mg(2+) site.

It belongs to the P-Pant transferase superfamily. AcpS family. Mg(2+) serves as cofactor.

Its subcellular location is the cytoplasm. The enzyme catalyses apo-[ACP] + CoA = holo-[ACP] + adenosine 3',5'-bisphosphate + H(+). Transfers the 4'-phosphopantetheine moiety from coenzyme A to a Ser of acyl-carrier-protein. This is Holo-[acyl-carrier-protein] synthase from Helicobacter pylori (strain G27).